The following is a 580-amino-acid chain: Proline--tRNA ligase (580 aa).

It belongs to the class-II aminoacyl-tRNA synthetase family. ProS type 1 subfamily. As to quaternary structure, homodimer.

The protein resides in the cytoplasm. The enzyme catalyses tRNA(Pro) + L-proline + ATP = L-prolyl-tRNA(Pro) + AMP + diphosphate. Its function is as follows. Catalyzes the attachment of proline to tRNA(Pro) in a two-step reaction: proline is first activated by ATP to form Pro-AMP and then transferred to the acceptor end of tRNA(Pro). As ProRS can inadvertently accommodate and process non-cognate amino acids such as alanine and cysteine, to avoid such errors it has two additional distinct editing activities against alanine. One activity is designated as 'pretransfer' editing and involves the tRNA(Pro)-independent hydrolysis of activated Ala-AMP. The other activity is designated 'posttransfer' editing and involves deacylation of mischarged Ala-tRNA(Pro). The misacylated Cys-tRNA(Pro) is not edited by ProRS. The sequence is that of Proline--tRNA ligase from Mycobacteroides abscessus (strain ATCC 19977 / DSM 44196 / CCUG 20993 / CIP 104536 / JCM 13569 / NCTC 13031 / TMC 1543 / L948) (Mycobacterium abscessus).